The following is a 225-amino-acid chain: MKTIKEQLLSSCKPLDELLGGGFESGVVTQIFGEAGSGKTNICLQLAIECVKKGKKAIFIDTEGLSADRFKQIAGENARKIAQDIIIFEPHSFEEQYSAVRETEKISTENVGVIIVDSATAYYRFELDDEDSSIRTRRELSNQIGFLHSLARKRDIVVVITNQVYSDIKSNSLKPIGGSSLEHISKTIIQLEKTGTGSRRAKIWKHRSRPEGTTCEFTITADGVR.

The protein belongs to the eukaryotic RecA-like protein family. RadB subfamily.

In terms of biological role, involved in DNA repair and in homologous recombination. May regulate the cleavage reactions of the branch-structured DNA. Has a very weak ATPase activity that is not stimulated by DNA. Binds DNA but does not promote DNA strands exchange. The polypeptide is DNA repair and recombination protein RadB (Methanococcoides burtonii (strain DSM 6242 / NBRC 107633 / OCM 468 / ACE-M)).